The primary structure comprises 37 residues: Large ribosomal subunit protein bL36A (37 aa).

The protein belongs to the bacterial ribosomal protein bL36 family.

This Actinobacillus pleuropneumoniae serotype 5b (strain L20) protein is Large ribosomal subunit protein bL36A.